Here is a 351-residue protein sequence, read N- to C-terminus: Peptidyl-Lys metalloendopeptidase (351 aa).

Residues 1–22 form the signal peptide; that stretch reads MFSLSSRFFLYSLCLSAVAVSA. A propeptide spanning residues 23–183 is cleaved from the precursor; the sequence is APGLSLSLSG…VARRSNLGKR (161 aa). Cystine bridges form between Cys-189–Cys-259 and Cys-261–Cys-281. His-301 is a Zn(2+) binding site. The active site involves Glu-302. Positions 305 and 314 each coordinate Zn(2+).

Belongs to the peptidase M35 family. Zn(2+) is required as a cofactor.

Its subcellular location is the secreted. It catalyses the reaction Preferential cleavage in proteins: -Xaa-|-Lys- (in which Xaa may be Pro).. Inhibited by chelating agents such as imidazole, alpha,alpha'-bipyridine, and 1,10-phenanthroline. The chain is Peptidyl-Lys metalloendopeptidase (MEP) from Armillaria mellea (Honey mushroom).